The primary structure comprises 823 residues: DNA ligase (823 aa).

NAD(+) contacts are provided by residues 31–35 (DDAFD) and 73–74 (SQ). Catalysis depends on K100, which acts as the N6-AMP-lysine intermediate. NAD(+) contacts are provided by R121, E163, K275, and K296. Zn(2+) is bound by residues C387, C390, C403, and C408. 3 BRCT domains span residues 562 to 655 (QAES…TGET), 654 to 742 (ETVH…DAHV), and 741 to 823 (HVHA…TPGT).

Belongs to the NAD-dependent DNA ligase family. LigA subfamily. The cofactor is Mg(2+). Mn(2+) serves as cofactor.

The enzyme catalyses NAD(+) + (deoxyribonucleotide)n-3'-hydroxyl + 5'-phospho-(deoxyribonucleotide)m = (deoxyribonucleotide)n+m + AMP + beta-nicotinamide D-nucleotide.. DNA ligase that catalyzes the formation of phosphodiester linkages between 5'-phosphoryl and 3'-hydroxyl groups in double-stranded DNA using NAD as a coenzyme and as the energy source for the reaction. It is essential for DNA replication and repair of damaged DNA. This chain is DNA ligase, found in Treponema pallidum (strain Nichols).